Consider the following 2291-residue polypeptide: Spectrin beta chain (2291 aa).

The segment at 1-271 (MTTDISIVRW…IITYVVTYYH (271 aa)) is actin-binding. 2 Calponin-homology (CH) domains span residues 50-154 (SVQK…LRFQ) and 169-274 (KSAK…HYFS). Spectrin repeat units lie at residues 300-408 (VHDY…ALRE), 420-521 (AARF…MRLE), 525-633 (QLQQ…RLEE), 636-739 (KLWQ…RLEN), 743-843 (YFQL…QRLL), 848-948 (LYKL…MDDL), 954-1057 (VQTF…KLEE), 1060-1166 (DLHR…VLLS), 1170-1272 (DQQL…EKLK), 1276-1376 (KLHE…GAML), 1386-1484 (QQTC…KALE), 1488-1591 (EAFQ…HLLE), 1594-1697 (KVQQ…RLNE), 1701-1802 (LFML…TQML), 1807-1909 (ELHK…QKLA), 1913-2015 (DLFR…ENLQ), and 2020-2089 (VYQF…KEMK). Over residues 2097 to 2140 (EAERQRIKEEQEAKAASEAAEQAKREAERRDDVDVGASHDDSER) the composition is skewed to basic and acidic residues. Residues 2097-2152 (EAERQRIKEEQEAKAASEAAEQAKREAERRDDVDVGASHDDSERGGTPGAGEGHEG) form a disordered region. In terms of domain architecture, PH spans 2147 to 2259 (GEGHEGYVTR…WVTSLKAQSD (113 aa)). At Ser-2195 the chain carries Phosphoserine. Residues 2262-2275 (AVAASRSQTLPATS) are compositionally biased toward polar residues. Residues 2262–2291 (AVAASRSQTLPATSQKDEPKRRSFFTLKKK) are disordered.

This sequence belongs to the spectrin family. In terms of assembly, native spectrin molecule is a tetramer composed of two antiparallel heterodimers joined head to head so that each end of the native molecule includes the C-terminus of the alpha subunit and the N-terminus of the beta subunit.

It localises to the cytoplasm. The protein resides in the cytoskeleton. Its subcellular location is the cell cortex. Spectrin is the major constituent of the cytoskeletal network underlying the erythrocyte plasma membrane. It associates with band 4.1 and actin to form the cytoskeletal superstructure of the erythrocyte plasma membrane. Interacts with calmodulin in a calcium-dependent manner. The sequence is that of Spectrin beta chain (beta-Spec) from Drosophila melanogaster (Fruit fly).